A 327-amino-acid polypeptide reads, in one-letter code: Malate dehydrogenase (327 aa).

NAD(+)-binding positions include 20-25 and D44; that span reads GAGRVG. R93 and R99 together coordinate substrate. Residues N106 and 129–131 contribute to the NAD(+) site; that span reads VTN. Residues N131 and R162 each coordinate substrate. The active-site Proton acceptor is the H186.

Belongs to the LDH/MDH superfamily. MDH type 3 family.

The catalysed reaction is (S)-malate + NAD(+) = oxaloacetate + NADH + H(+). Its function is as follows. Catalyzes the reversible oxidation of malate to oxaloacetate. The chain is Malate dehydrogenase from Nostoc punctiforme (strain ATCC 29133 / PCC 73102).